A 201-amino-acid chain; its full sequence is Proteinase inhibitor type-2 CEVI57 (201 aa).

Residues 1-23 (MAVYKVSFLAHLLVLGMYLLVST) form the signal peptide. 3 consecutive repeat copies span residues 27-83 (ANAC…DPKN), 84-143 (PNIC…IEPK), and 144-199 (GCTK…QSIS). Intrachain disulfides connect cysteine 30/cysteine 118, cysteine 34/cysteine 114, cysteine 42/cysteine 124, cysteine 54/cysteine 91, cysteine 57/cysteine 75, cysteine 58/cysteine 87, cysteine 64/cysteine 100, and cysteine 117/cysteine 135.

The protein belongs to the protease inhibitor I20 (potato type II proteinase inhibitor) family.

The sequence is that of Proteinase inhibitor type-2 CEVI57 (CEVI57) from Solanum lycopersicum (Tomato).